The sequence spans 412 residues: Putative competence-damage inducible protein (412 aa).

Belongs to the CinA family.

The polypeptide is Putative competence-damage inducible protein (Bacillus cereus (strain ZK / E33L)).